Reading from the N-terminus, the 337-residue chain is Phosphoribosylformylglycinamidine cyclo-ligase (337 aa).

It belongs to the AIR synthase family.

It localises to the cytoplasm. The catalysed reaction is 2-formamido-N(1)-(5-O-phospho-beta-D-ribosyl)acetamidine + ATP = 5-amino-1-(5-phospho-beta-D-ribosyl)imidazole + ADP + phosphate + H(+). The protein operates within purine metabolism; IMP biosynthesis via de novo pathway; 5-amino-1-(5-phospho-D-ribosyl)imidazole from N(2)-formyl-N(1)-(5-phospho-D-ribosyl)glycinamide: step 2/2. In Pseudothermotoga lettingae (strain ATCC BAA-301 / DSM 14385 / NBRC 107922 / TMO) (Thermotoga lettingae), this protein is Phosphoribosylformylglycinamidine cyclo-ligase.